A 524-amino-acid chain; its full sequence is Probable cytosol aminopeptidase (524 aa).

Residues Lys-288 and Asp-293 each coordinate Mn(2+). Lys-300 is an active-site residue. Residues Asp-311, Asp-370, and Glu-372 each contribute to the Mn(2+) site. Arg-374 is a catalytic residue.

This sequence belongs to the peptidase M17 family. It depends on Mn(2+) as a cofactor.

It localises to the cytoplasm. The enzyme catalyses Release of an N-terminal amino acid, Xaa-|-Yaa-, in which Xaa is preferably Leu, but may be other amino acids including Pro although not Arg or Lys, and Yaa may be Pro. Amino acid amides and methyl esters are also readily hydrolyzed, but rates on arylamides are exceedingly low.. It catalyses the reaction Release of an N-terminal amino acid, preferentially leucine, but not glutamic or aspartic acids.. In terms of biological role, presumably involved in the processing and regular turnover of intracellular proteins. Catalyzes the removal of unsubstituted N-terminal amino acids from various peptides. In Mycobacterium leprae (strain TN), this protein is Probable cytosol aminopeptidase (pepA).